The following is a 70-amino-acid chain: Putative antitoxin VapB34 (70 aa).

In terms of biological role, antitoxin component of a possible type II toxin-antitoxin (TA) system. The cognate toxin is VapC34. The sequence is that of Putative antitoxin VapB34 (vapB34) from Mycobacterium tuberculosis (strain CDC 1551 / Oshkosh).